The sequence spans 491 residues: Trigger factor (491 aa).

The 88-residue stretch at 173-260 folds into the PPIase FKBP-type domain; it reads GDVAVVSFSG…LDELKGRELP (88 aa). Residues 435 to 491 form a disordered region; that stretch reads MVDPASEDKPAKASKAKSSKAKAEKEPAAEGQAKAKPAAKTSKSKTKAAEKLITPID. Residues 463 to 475 show a composition bias toward low complexity; it reads AEGQAKAKPAAKT.

It belongs to the FKBP-type PPIase family. Tig subfamily.

The protein localises to the cytoplasm. It catalyses the reaction [protein]-peptidylproline (omega=180) = [protein]-peptidylproline (omega=0). In terms of biological role, involved in protein export. Acts as a chaperone by maintaining the newly synthesized protein in an open conformation. Functions as a peptidyl-prolyl cis-trans isomerase. The polypeptide is Trigger factor (Synechococcus sp. (strain RCC307)).